The primary structure comprises 266 residues: Undecaprenyl-diphosphatase 1 (266 aa).

Helical transmembrane passes span methionine 1–isoleucine 21, glutamine 39–phenylalanine 59, serine 83–leucine 103, serine 113–alanine 133, isoleucine 141–isoleucine 161, phenylalanine 189–leucine 209, threonine 218–leucine 238, and methionine 244–leucine 264.

The protein belongs to the UppP family.

It is found in the cell inner membrane. It carries out the reaction di-trans,octa-cis-undecaprenyl diphosphate + H2O = di-trans,octa-cis-undecaprenyl phosphate + phosphate + H(+). Catalyzes the dephosphorylation of undecaprenyl diphosphate (UPP). Confers resistance to bacitracin. This is Undecaprenyl-diphosphatase 1 from Pseudoalteromonas translucida (strain TAC 125).